The primary structure comprises 335 residues: Biotin synthase (335 aa).

In terms of domain architecture, Radical SAM core spans 53–276 (VEIEGIVSVK…RTILRFAGGR (224 aa)). Residues cysteine 66, cysteine 70, and cysteine 73 each coordinate [4Fe-4S] cluster. [2Fe-2S] cluster-binding residues include cysteine 109, cysteine 142, cysteine 201, and arginine 271.

The protein belongs to the radical SAM superfamily. Biotin synthase family. As to quaternary structure, homodimer. [4Fe-4S] cluster serves as cofactor. The cofactor is [2Fe-2S] cluster.

It carries out the reaction (4R,5S)-dethiobiotin + (sulfur carrier)-SH + 2 reduced [2Fe-2S]-[ferredoxin] + 2 S-adenosyl-L-methionine = (sulfur carrier)-H + biotin + 2 5'-deoxyadenosine + 2 L-methionine + 2 oxidized [2Fe-2S]-[ferredoxin]. It functions in the pathway cofactor biosynthesis; biotin biosynthesis; biotin from 7,8-diaminononanoate: step 2/2. Its function is as follows. Catalyzes the conversion of dethiobiotin (DTB) to biotin by the insertion of a sulfur atom into dethiobiotin via a radical-based mechanism. The sequence is that of Biotin synthase from Acidothermus cellulolyticus (strain ATCC 43068 / DSM 8971 / 11B).